A 338-amino-acid polypeptide reads, in one-letter code: 5-dehydro-2-deoxygluconokinase (338 aa).

The protein belongs to the carbohydrate kinase PfkB family.

It carries out the reaction 5-dehydro-2-deoxy-D-gluconate + ATP = 6-phospho-5-dehydro-2-deoxy-D-gluconate + ADP + H(+). The protein operates within polyol metabolism; myo-inositol degradation into acetyl-CoA; acetyl-CoA from myo-inositol: step 5/7. Catalyzes the phosphorylation of 5-dehydro-2-deoxy-D-gluconate (2-deoxy-5-keto-D-gluconate or DKG) to 6-phospho-5-dehydro-2-deoxy-D-gluconate (DKGP). The polypeptide is 5-dehydro-2-deoxygluconokinase (Mesomycoplasma hyopneumoniae (strain J / ATCC 25934 / NCTC 10110) (Mycoplasma hyopneumoniae)).